We begin with the raw amino-acid sequence, 255 residues long: Reticulon-like protein B3 (255 aa).

Basic and acidic residues predominate over residues 1–25; that stretch reads MAEEHKHEESIMEKISEKIHGHDDS. Positions 1 to 38 are disordered; that stretch reads MAEEHKHEESIMEKISEKIHGHDDSSSSSSDSDDDKNS. N-acetylalanine is present on Ala-2. Residues 64-255 form the Reticulon domain; it reads PADIFLWRNK…GAFAFIKKKD (192 aa). The next 3 helical transmembrane spans lie at 75–95, 97–117, and 186–206; these read VSGGVLGAATVSWILFELLEY, LLTLFGHISILALAVLFLWSS, and CNFLTLIYIATVLLFTIPVLY.

Its subcellular location is the endoplasmic reticulum membrane. The protein localises to the vacuole membrane. The chain is Reticulon-like protein B3 (RTNLB3) from Arabidopsis thaliana (Mouse-ear cress).